Consider the following 220-residue polypeptide: Nucleoside diphosphate kinase, mitochondrial (220 aa).

Residues 1 to 57 (MFSRFARAFPKILASGASQRTFATVQKAFANPTSKKLIVGSSLLIGSAFATTSFVAC) constitute a mitochondrion transit peptide. Residues K80, F128, R156, T162, R173, and N183 each contribute to the ATP site. H186 serves as the catalytic Pros-phosphohistidine intermediate.

This sequence belongs to the NDK family. Requires Mg(2+) as cofactor.

Its subcellular location is the mitochondrion intermembrane space. It catalyses the reaction a 2'-deoxyribonucleoside 5'-diphosphate + ATP = a 2'-deoxyribonucleoside 5'-triphosphate + ADP. It carries out the reaction a ribonucleoside 5'-diphosphate + ATP = a ribonucleoside 5'-triphosphate + ADP. Functionally, major role in the synthesis of nucleoside triphosphates other than ATP. The ATP gamma phosphate is transferred to the NDP beta phosphate via a ping-pong mechanism, using a phosphorylated active-site intermediate. In Dictyostelium discoideum (Social amoeba), this protein is Nucleoside diphosphate kinase, mitochondrial (ndkM).